A 157-amino-acid chain; its full sequence is MGVIEFLLALAQDMILAAIPAVGFAMVFNVPVRALRWCALLGSIGHGSRMILMTSGLNIEWSTFMASMLGGTIGIQWSRWYLAHPKVFTVAAVIPMFPGISAYTAMISAVKISQLGYSEPLMITLLTNFLTASSIVGALSIGLSIPGLWLYRKRPRV.

4 helical membrane-spanning segments follow: residues 8 to 28 (LALAQDMILAAIPAVGFAMVF), 50 to 70 (MILMTSGLNIEWSTFMASMLG), 87 to 107 (VFTVAAVIPMFPGISAYTAMI), and 129 to 149 (FLTASSIVGALSIGLSIPGLW).

The protein belongs to the ThrE exporter (TC 2.A.79) family. In terms of assembly, the transporter is composed of YjjB and YjjP.

It is found in the cell inner membrane. Its function is as follows. Involved in succinate export with YjjP. Both proteins are required for export. The sequence is that of Probable succinate transporter subunit YjjB from Escherichia coli O157:H7 (strain EC4115 / EHEC).